A 172-amino-acid chain; its full sequence is Large ribosomal subunit protein uL10 (172 aa).

Belongs to the universal ribosomal protein uL10 family. As to quaternary structure, part of the ribosomal stalk of the 50S ribosomal subunit. The N-terminus interacts with L11 and the large rRNA to form the base of the stalk. The C-terminus forms an elongated spine to which L12 dimers bind in a sequential fashion forming a multimeric L10(L12)X complex.

Functionally, forms part of the ribosomal stalk, playing a central role in the interaction of the ribosome with GTP-bound translation factors. The protein is Large ribosomal subunit protein uL10 of Ruegeria pomeroyi (strain ATCC 700808 / DSM 15171 / DSS-3) (Silicibacter pomeroyi).